We begin with the raw amino-acid sequence, 1148 residues long: Alpha-mannosidase 2 (1148 aa).

At 1 to 5 the chain is on the cytoplasmic side; it reads MKLSR. A helical; Signal-anchor for type II membrane protein membrane pass occupies residues 6–26; the sequence is QFTVFGSAIFCVVIFSLYLML. The Lumenal segment spans residues 27-1148; the sequence is DRGHLDYPRG…EISTSRIRLR (1122 aa). Residues Ser-80 and Ser-82 each carry the phosphoserine modification. N-linked (GlcNAc...) asparagine glycosylation is present at Asn-93. Positions 174, 176, 288, and 568 each coordinate Zn(2+). The Nucleophile role is filled by Asp-288. Residues 1121–1148 are disordered; sequence MHSPPDAQNTSEVSLSPMEISTSRIRLR.

It belongs to the glycosyl hydrolase 38 family. Homodimer; disulfide-linked. Zn(2+) is required as a cofactor. Post-translationally, glycosylated. Liver.

The protein resides in the golgi apparatus membrane. The enzyme catalyses N(4)-{beta-D-GlcNAc-(1-&gt;2)-alpha-D-Man-(1-&gt;3)-[alpha-D-Man-(1-&gt;3)-[alpha-D-Man-(1-&gt;6)]-alpha-D-Man-(1-&gt;6)]-beta-D-Man-(1-&gt;4)-beta-D-GlcNAc-(1-&gt;4)-beta-D-GlcNAc}-L-asparaginyl-[protein] + 2 H2O = 2 alpha-D-mannopyranose + an N(4)-{beta-D-GlcNAc-(1-&gt;2)-alpha-D-Man-(1-&gt;3)-[alpha-D-Man-(1-&gt;6)]-beta-D-Man-(1-&gt;4)-beta-D-GlcNAc-(1-&gt;4)-beta-D-GlcNAc}-L-asparaginyl-[protein]. It participates in protein modification; protein glycosylation. With respect to regulation, inhibited by swainsonine. Catalyzes the first committed step in the biosynthesis of complex N-glycans. It controls conversion of high mannose to complex N-glycans; the final hydrolytic step in the N-glycan maturation pathway. The protein is Alpha-mannosidase 2 (Man2a1) of Rattus norvegicus (Rat).